Here is a 545-residue protein sequence, read N- to C-terminus: Chaperonin GroEL (545 aa).

Residues 30 to 33 (TMGP), Lys-51, 87 to 91 (DGTTT), Gly-415, and Asp-494 contribute to the ATP site.

This sequence belongs to the chaperonin (HSP60) family. As to quaternary structure, forms a cylinder of 14 subunits composed of two heptameric rings stacked back-to-back. Interacts with the co-chaperonin GroES.

It is found in the cytoplasm. The enzyme catalyses ATP + H2O + a folded polypeptide = ADP + phosphate + an unfolded polypeptide.. Functionally, together with its co-chaperonin GroES, plays an essential role in assisting protein folding. The GroEL-GroES system forms a nano-cage that allows encapsulation of the non-native substrate proteins and provides a physical environment optimized to promote and accelerate protein folding. In Helicobacter hepaticus (strain ATCC 51449 / 3B1), this protein is Chaperonin GroEL.